Reading from the N-terminus, the 508-residue chain is MADVEVRKEKKKKKIKEEPLDGDDIGTLQKQGNFQIKPSSKIAELDTSQWPLLLKNFDKLNIRSNHYTPLAHGSSPLNRDIKEYMKTGFINLDKPSNPSSHEVVAWIKKILKVEKTGHSGTLDPKVTGCLIVCIDRATRLVKSQQSAGKEYVAIFKLHGAVESVAKVRQGLEKLRGALFQRPPLISAVKRQLRVRTVYDSKLLDYDETRNMGVFWVSCEAGSYIRTMCVHLGLVLGVGGQMLELRRVRSGIQSERDGMVTMHDVLDAMWLYENHKDESMLRRVIKPLEGLLVNHKRIIMKDSSVNAVCYGAKITLPGVLRYEDGIEIDQEIVICTTKGEAICLAIALMTTATMASCDHGVVAKIKRVIMERDTYPRKWGLGPKASAKKALIAAGKLDKFGRPNENTPKEWLTGYVDYNAKKPAAQEVSPTNGSSEPSKRKLSTSSVEETAAAAVSEETPSKDKKKKKKKHKGDEEAPEAAEEEAEPVEKEKKKKKKKDKDRDRDEAQE.

The interval 1–29 is disordered; sequence MADVEVRKEKKKKKIKEEPLDGDDIGTLQ. Catalysis depends on aspartate 123, which acts as the Nucleophile. In terms of domain architecture, PUA spans 294–369; that stretch reads HKRIIMKDSS…VVAKIKRVIM (76 aa). Residues 423–508 form a disordered region; sequence AAQEVSPTNG…KDRDRDEAQE (86 aa). Serine 442 carries the post-translational modification Phosphoserine. Residues 442 to 457 are compositionally biased toward low complexity; sequence STSSVEETAAAAVSEE. Threonine 443 is subject to Phosphothreonine. Phosphoserine is present on residues serine 444 and serine 445. Threonine 449 carries the post-translational modification Phosphothreonine. Serine 455 bears the Phosphoserine mark. Threonine 458 carries the post-translational modification Phosphothreonine. The span at 475 to 485 shows a compositional bias: acidic residues; the sequence is EAPEAAEEEAE. Residues 499–508 are compositionally biased toward basic and acidic residues; sequence KDRDRDEAQE.

The protein belongs to the pseudouridine synthase TruB family. As to quaternary structure, component of the box H/ACA small nucleolar ribonucleoprotein (H/ACA snoRNP) complex consisting of Nop60B, Gar1, NPH2 and Nop10, and associated with H/ACA-type snoRNAs. Expressed at higher levels in females than in males. As to expression, expressed almost exclusively in females with high levels of expression in the ovary.

The protein resides in the nucleus. Its subcellular location is the nucleolus. It catalyses the reaction a uridine in RNA = a pseudouridine in RNA. Functionally, catalytic subunit of the box H/ACA small nucleolar ribonucleoprotein (H/ACA snoRNP) complex, which catalyzes pseudouridylation of rRNA. This involves the isomerization of uridine such that the ribose is subsequently attached to C5, instead of the normal N1. Pseudouridine ('psi') residues may serve to stabilize the conformation of rRNAs. Required for ribosome biogenesis; plays a central role in ribosomal RNA processing. H/ACA snoRNP complex-dependent ribosome biogenesis is important in female germline cell differentiation during oogenesis. Essential for viability and female fertility. Required for maintenance of the germline stem cell lineage during spermatogenesis. The chain is H/ACA ribonucleoprotein complex subunit 4 from Drosophila melanogaster (Fruit fly).